The following is a 298-amino-acid chain: Mimecan (298 aa).

Positions 1 to 19 (METVHSTFLLLLFVPLTQQ) are cleaved as a signal peptide. N-linked (GlcNAc...) (keratan sulfate) asparagine glycosylation occurs at asparagine 88. LRR repeat units follow at residues 112-131 (DAVPPLPKESAYLYARFNKI), 132-155 (KKLTAKDFADMPNLRRLDFTGNLI), 156-179 (EDIEDGTFSKLSLLEELTLAENQL), 180-199 (LRLPVLPPKLTLLNAKHNKI), 200-225 (KSKGIKANTFKKLNKLSFLYLDHNDL), 226-246 (ESVPPNLPESLRVIHLQFNSI), and 247-277 (SSLTDDTFCKANDTRYIRERIEEIRLEGNPI). Cysteine 255 and cysteine 288 are oxidised to a cystine. A glycan (N-linked (GlcNAc...) (keratan sulfate) asparagine) is linked at asparagine 258.

Belongs to the small leucine-rich proteoglycan (SLRP) family. SLRP class III subfamily. Contains keratan sulfate.

The protein localises to the secreted. It localises to the extracellular space. The protein resides in the extracellular matrix. Its function is as follows. Induces bone formation in conjunction with TGF-beta-1 or TGF-beta-2. In Mus musculus (Mouse), this protein is Mimecan (Ogn).